A 313-amino-acid chain; its full sequence is Porphobilinogen deaminase (313 aa).

At Cys-242 the chain carries S-(dipyrrolylmethanemethyl)cysteine.

This sequence belongs to the HMBS family. Monomer. The cofactor is dipyrromethane.

It catalyses the reaction 4 porphobilinogen + H2O = hydroxymethylbilane + 4 NH4(+). The protein operates within porphyrin-containing compound metabolism; protoporphyrin-IX biosynthesis; coproporphyrinogen-III from 5-aminolevulinate: step 2/4. Functionally, tetrapolymerization of the monopyrrole PBG into the hydroxymethylbilane pre-uroporphyrinogen in several discrete steps. The sequence is that of Porphobilinogen deaminase from Escherichia coli O45:K1 (strain S88 / ExPEC).